A 497-amino-acid chain; its full sequence is RNA-splicing ligase RtcB homolog (497 aa).

Mn(2+) is bound by residues Asp111, Cys114, His219, His251, and His345. GMP is bound at residue 218-222 (NHYAE). GMP contacts are provided by residues 345–346 (HN), 394–397 (GGTM), Ser401, 420–423 (HGAG), and Lys496. The active-site GMP-histidine intermediate is His420.

This sequence belongs to the RtcB family. As to quaternary structure, catalytic component of the tRNA-splicing ligase complex. Mn(2+) is required as a cofactor.

It catalyses the reaction a 3'-end 3'-phospho-ribonucleotide-RNA + a 5'-end dephospho-ribonucleoside-RNA + GTP = a ribonucleotidyl-ribonucleotide-RNA + GMP + diphosphate. It carries out the reaction a 3'-end 2',3'-cyclophospho-ribonucleotide-RNA + a 5'-end dephospho-ribonucleoside-RNA + GTP + H2O = a ribonucleotidyl-ribonucleotide-RNA + GMP + diphosphate + H(+). Catalytic subunit of the tRNA-splicing ligase complex that acts by directly joining spliced tRNA halves to mature-sized tRNAs by incorporating the precursor-derived splice junction phosphate into the mature tRNA as a canonical 3',5'-phosphodiester. May act as an RNA ligase with broad substrate specificity, and may function toward other RNAs. The chain is RNA-splicing ligase RtcB homolog from Monosiga brevicollis (Choanoflagellate).